The primary structure comprises 346 residues: MRVADFSFDLPDELIARYPTAQRNASRLLTLDGPTGALADKQFTDLFEMINPGDLMVFNNTRVIPARLFGQKATGGKLEILVERMLDDKRILAHVRSSKSPKVDTLINLDGEHQMKMIARHDALFELELLSELTILEVLEQVGHMPLPPYIDRPDEDADKERYQTVYNKTPGAVAAPTAGLHFDDAMLSALKHKGVNIAFVTLHVGAGTFQPVRVDNVLEHKMHSEWADVPQDVVDLIAQTKAAGNRVIAVGTTSVRSLESAAKACGDKPLATFSGDTDIFIYPGYEFKVVDAMVTNFHLPESTLIMLISAFTGVDEVRYAYQHAIAQKYRFFSYGDAMFLTKKAQ.

The protein belongs to the QueA family. In terms of assembly, monomer.

It localises to the cytoplasm. The enzyme catalyses 7-aminomethyl-7-carbaguanosine(34) in tRNA + S-adenosyl-L-methionine = epoxyqueuosine(34) in tRNA + adenine + L-methionine + 2 H(+). Its pathway is tRNA modification; tRNA-queuosine biosynthesis. Functionally, transfers and isomerizes the ribose moiety from AdoMet to the 7-aminomethyl group of 7-deazaguanine (preQ1-tRNA) to give epoxyqueuosine (oQ-tRNA). This chain is S-adenosylmethionine:tRNA ribosyltransferase-isomerase, found in Shewanella denitrificans (strain OS217 / ATCC BAA-1090 / DSM 15013).